We begin with the raw amino-acid sequence, 122 residues long: RING-box protein 1B (122 aa).

Residues 1–23 show a composition bias toward acidic residues; sequence MAEEIEVEETEDFHDMDFNDEEP. The disordered stretch occupies residues 1–28; that stretch reads MAEEIEVEETEDFHDMDFNDEEPSCSGG. 11 residues coordinate Zn(2+): C57, C60, C68, C71, C82, C89, H91, H94, H96, C108, and D111. An RING-type zinc finger spans residues 57 to 112; it reads CAICRNHIMNLCIECQADPNANQDECTVAWGECNHAFHYHCIARWLKTRLVCPLDN.

This sequence belongs to the RING-box family. As to quaternary structure, part of a SCF complex consisting of Skpa (SKP1), Cul1, Roc1B and a F-box protein. Highly expressed in early embryos, and in pupae. Widely expressed in adult males, while it is weakly expressed in adult females.

The protein localises to the cytoplasm. The protein resides in the nucleus. It functions in the pathway protein modification; protein ubiquitination. Its function is as follows. Component of the SCF (SKP1-CUL1-F-box protein) E3 ubiquitin ligase complex, which mediates the ubiquitination and subsequent proteasomal degradation of target proteins. Through the RING-type zinc finger, seems to recruit the E2 ubiquitination enzyme to the complex and brings it into close proximity to the substrate. This is RING-box protein 1B (Roc1b) from Drosophila melanogaster (Fruit fly).